A 458-amino-acid chain; its full sequence is Divalent metal cation transporter MntH (458 aa).

Transmembrane regions (helical) follow at residues 38-58, 76-96, 119-139, 151-171, 180-200, 223-243, 275-295, 315-335, 370-390, 393-413, and 437-457; these read GFWK…VGYM, SLLS…AMAA, GGFL…AEII, MPLI…LLLM, AVVA…VILA, MLYL…LFLG, LTMA…LFFG, IVGA…LLAS, LMSV…EAKI, LLTF…IPLV, and FISG…LGFV.

This sequence belongs to the NRAMP family.

It is found in the cell membrane. In terms of biological role, h(+)-stimulated, divalent metal cation uptake system. In Lacticaseibacillus paracasei (strain ATCC 334 / BCRC 17002 / CCUG 31169 / CIP 107868 / KCTC 3260 / NRRL B-441) (Lactobacillus paracasei), this protein is Divalent metal cation transporter MntH.